Here is a 71-residue protein sequence, read N- to C-terminus: Prokaryotic ubiquitin-like protein Pup (71 aa).

The tract at residues 1–30 (MPSASGHHQIPAETQRHDDDQTQETAQGLS) is disordered. Residues 23 to 56 (QETAQGLSAAAMLAQEQADDLDAILDDIETVLET) adopt a coiled-coil conformation. The interval 27 to 65 (QGLSAAAMLAQEQADDLDAILDDIETVLETNAEEYVSSF) is ARC ATPase binding. Glu71 is covalently cross-linked (Isoglutamyl lysine isopeptide (Glu-Lys) (interchain with K-? in acceptor proteins)).

This sequence belongs to the prokaryotic ubiquitin-like protein family. Strongly interacts with the proteasome-associated ATPase ARC through a hydrophobic interface; the interacting region of Pup lies in its C-terminal half. There is one Pup binding site per ARC hexamer ring.

It participates in protein degradation; proteasomal Pup-dependent pathway. Its function is as follows. Protein modifier that is covalently attached to lysine residues of substrate proteins, thereby targeting them for proteasomal degradation. The tagging system is termed pupylation. This chain is Prokaryotic ubiquitin-like protein Pup, found in Bifidobacterium animalis subsp. lactis (strain AD011).